A 632-amino-acid chain; its full sequence is Nucleoside triphosphatase I (632 aa).

The Helicase ATP-binding domain occupies 42 to 204 (FLGLDKMHSL…IMLVNLLRPK (163 aa)). 55–62 (HETGVGKT) lines the ATP pocket. The DEXH box motif lies at 141–144 (DECH). The Helicase C-terminal domain occupies 367-532 (KFTDVCLRIL…EFTQLFKVFK (166 aa)). Residues 457 to 524 (DIFILDMTWN…DIIRNKSKEF (68 aa)) are binding to the cap-specific mRNA (nucleoside-2'-O-)-methyltransferase.

It belongs to the helicase family. NPH I subfamily. Monomer. Interacts (via C-terminus) with RAP94 (via N-terminus). Interacts with the cap-specific mRNA (nucleoside-2'-O-)-methyltransferase.

The protein resides in the virion. The catalysed reaction is a ribonucleoside 5'-triphosphate + H2O = a ribonucleoside 5'-diphosphate + phosphate + H(+). In terms of biological role, DNA-dependent ATPase required for providing the needed energy to achieve the termination of early transcripts. Acts in concert with the RAP94 subunit of the virion RNA polymerase and the capping enzyme/VTF to catalyze release of UUUUUNU-containing nascent RNA from the elongation complex. NPH-I must bind ssDNA in order to exhibit ATPase activity. This is Nucleoside triphosphatase I (NPH1) from Rabbit fibroma virus (strain Kasza) (RFV).